A 1057-amino-acid polypeptide reads, in one-letter code: Outer capsid protein VP2 (1057 aa).

It belongs to the orbivirus VP2 family.

It localises to the virion. The VP2 protein is one of the two proteins (with VP5) which constitute the virus particle outer capsid. It is the major target of the host immunogenic response. The chain is Outer capsid protein VP2 (Segment-2) from Anas (ducks).